The sequence spans 278 residues: ITGAEGGAPDAPLVLVGAHPAARLRGDPRVRWFHSVNAGVDALLDGGWPAGVLLTRTVGRMGERIGQYALAWVLADCQGVPGHLARTAAPPGAANPPNWPRGQTALVYGTGHIGTAVASRLGAAGLHTVGVGRAEHAPGGPFDERITAGEDGPWLGRARFVVDALPLTDATRDFFADARLSALRGATFLNVGRGATVSLPALGRALAAGHVRGAVLDVLTDEPPAPGHPVWELPRTTLTSHSAGITAGTDITADFRACWEALRAGQAPELAVRVGRGY.

NAD(+) is bound by residues 112 to 113, 191 to 193, and Asp217; these read HI and VGR. Arg193 is a catalytic residue. Glu222 is a catalytic residue. His241 serves as the catalytic Proton donor. 241 to 244 serves as a coordination point for NAD(+); the sequence is HSAG.

This sequence belongs to the D-isomer specific 2-hydroxyacid dehydrogenase family.

This is an uncharacterized protein from Streptomyces coelicolor.